The primary structure comprises 457 residues: MSECVVRGGQVVQAGGVVSADVAIEDGRISAIGPELPGAKREINARGLTVFPGVIDDHLHFNEPGRTEWEGAATGSRALAAGGGTAFFDMPLNSTPCTVDRAAFAGKRAALERASIADFALWGGIVPGNLSELAPLAESGVIGFKAFLSDSGLPEFPRADDLTLYEGMREAARLGLPVAVHAESEEITSRLTRRARDAGRTSARDYLDSRPVIAEVEAIHRAALLAREAGCKLHIVHISSGRGVAAALEARTMGTDIAIETCAHYLFFTEDDLLRLGAIAKCAPPLRDRQEFDRLWAHVLGGIVDVVASDHSPAPPAMKTGDDFFAIWGGIAGVQSTLAVLLEAGHFQRGLRLERIAELTAGYPARRFALHNKGSIAVGNDADLTLVDMDGQENLEPESLWQKHPVNPYTGNSFRGSIRRTMLRGTTIFNHDEITVKSGGQLLRPKANTYATSGIHP.

His58, His60, Lys145, His181, His237, and Asp310 together coordinate Zn(2+). Residue Lys145 is modified to N6-carboxylysine.

The protein belongs to the metallo-dependent hydrolases superfamily. Allantoinase family. In terms of assembly, homotetramer. It depends on Zn(2+) as a cofactor. Post-translationally, carboxylation allows a single lysine to coordinate two zinc ions.

The catalysed reaction is (S)-allantoin + H2O = allantoate + H(+). Its pathway is nitrogen metabolism; (S)-allantoin degradation; allantoate from (S)-allantoin: step 1/1. Functionally, catalyzes the conversion of allantoin (5-ureidohydantoin) to allantoic acid by hydrolytic cleavage of the five-member hydantoin ring. The protein is Allantoinase of Solibacter usitatus (strain Ellin6076).